We begin with the raw amino-acid sequence, 290 residues long: Eukaryotic translation initiation factor 3 subunit G (290 aa).

The interval 1–34 is disordered; sequence MSRLGNRAADWADDEEFDDPSALPAQQVTTNKDG. One can recognise an RRM domain in the interval 210–288; it reads ATLRVTNVSE…LILRVEFAKR (79 aa).

It belongs to the eIF-3 subunit G family. As to quaternary structure, component of the eukaryotic translation initiation factor 3 (eIF-3) complex.

The protein resides in the cytoplasm. RNA-binding component of the eukaryotic translation initiation factor 3 (eIF-3) complex, which is involved in protein synthesis of a specialized repertoire of mRNAs and, together with other initiation factors, stimulates binding of mRNA and methionyl-tRNAi to the 40S ribosome. The eIF-3 complex specifically targets and initiates translation of a subset of mRNAs involved in cell proliferation. This subunit can bind 18S rRNA. This chain is Eukaryotic translation initiation factor 3 subunit G (tif35), found in Aspergillus fumigatus (strain CBS 144.89 / FGSC A1163 / CEA10) (Neosartorya fumigata).